The sequence spans 749 residues: Catalase-peroxidase 2 (749 aa).

Residues Met1–Ala27 form the signal peptide. Residues Trp107–Tyr229 constitute a cross-link (tryptophyl-tyrosyl-methioninium (Trp-Tyr) (with M-255)). The Proton acceptor role is filled by His108. The segment at residues Tyr229 to Met255 is a cross-link (tryptophyl-tyrosyl-methioninium (Tyr-Met) (with W-107)). His270 is a heme b binding site.

It belongs to the peroxidase family. Peroxidase/catalase subfamily. As to quaternary structure, homodimer or homotetramer. The cofactor is heme b. Formation of the three residue Trp-Tyr-Met cross-link is important for the catalase, but not the peroxidase activity of the enzyme.

It catalyses the reaction H2O2 + AH2 = A + 2 H2O. The enzyme catalyses 2 H2O2 = O2 + 2 H2O. In terms of biological role, bifunctional enzyme with both catalase and broad-spectrum peroxidase activity. The polypeptide is Catalase-peroxidase 2 (Legionella pneumophila (strain Paris)).